The sequence spans 463 residues: SPARC-related modular calcium-binding protein 1 (463 aa).

Positions 1–25 (MLPARVRLLTPHLLLVLVQLSPAGG) are cleaved as a signal peptide. Residues 36-88 (SDRDPPCNPHCPRTQPKPICASDGRSYESMCEYQRAKCRDPALAVVHRGRCKD) enclose the Kazal-like domain. 6 disulfide bridges follow: Cys-42-Cys-73, Cys-46-Cys-66, Cys-55-Cys-86, Cys-94-Cys-117, Cys-128-Cys-135, and Cys-137-Cys-157. Positions 91–157 (QSKCRLERAQ…SSVQNKTPVC (67 aa)) constitute a Thyroglobulin type-1 1 domain. The N-linked (GlcNAc...) asparagine glycan is linked to Asn-224. A Thyroglobulin type-1 2 domain is found at 234–302 (VHSCDQERQS…TSTRYVMPSC (69 aa)). Intrachain disulfides connect Cys-237–Cys-261, Cys-272–Cys-279, and Cys-281–Cys-302. 2 EF-hand domains span residues 369–404 (LEERVAHWYFSQLDSNSSDDINKREMKPFKRYVKKK) and 406–441 (KPKKCARRFTDYCDLNKDKVISLPELKGCLGVSKEG). Ca(2+)-binding residues include Asp-382, Asn-384, Ser-386, Asp-388, Glu-393, Asp-419, Asn-421, Asp-423, and Glu-430. N-linked (GlcNAc...) asparagine glycosylation is present at Asn-384.

Post-translationally, glycosylated. Widely expressed in many tissues with a strongest signal in ovary.

Its subcellular location is the secreted. It localises to the extracellular space. The protein resides in the extracellular matrix. It is found in the basement membrane. Probable regulator of osteoblast differentiation. Plays essential roles in both eye and limb development. The protein is SPARC-related modular calcium-binding protein 1 (Smoc1) of Mus musculus (Mouse).